Here is a 1261-residue protein sequence, read N- to C-terminus: Pentatricopeptide repeat-containing protein 5, mitochondrial (1261 aa).

15 PPR repeats span residues 365 to 404, 405 to 442, 443 to 479, 480 to 514, 550 to 584, 806 to 849, 852 to 886, 887 to 924, 925 to 959, 960 to 995, 996 to 1031, 1032 to 1068, 1109 to 1143, 1144 to 1179, and 1180 to 1214; these read HPDL…TSMT, NVRS…NQVI, PSSI…TYKA, SPST…RFSD, TNFT…KVSL, HPEV…EKAN, MALI…GYIP, RAST…NVKP, SVFL…GLLP, TSVT…NYQP, RVAP…DIEP, SSHT…DVPI, DANL…NVSL, NAYI…MSGK, and EPST…RYPL. The segment at 1225–1261 is disordered; sequence NSHMGQKPKRRSLNTSHSSLASLGNASTQHSINSSIN. Over residues 1237 to 1261 the composition is skewed to polar residues; sequence LNTSHSSLASLGNASTQHSINSSIN.

The protein resides in the mitochondrion. Its function is as follows. Mitochondrial RNA-binding protein that acts as a general negative regulator of mitochondrial translation. This is Pentatricopeptide repeat-containing protein 5, mitochondrial (ppr5) from Schizosaccharomyces pombe (strain 972 / ATCC 24843) (Fission yeast).